Consider the following 632-residue polypeptide: MAU2 chromatid cohesion factor homolog (632 aa).

2 TPR repeats span residues 453-486 and 493-526; these read GGFY…ANAE and SCSL…ASKI.

Belongs to the SCC4/mau-2 family. In terms of assembly, interacts with Nipped-B to form the cohesin loading complex.

It localises to the nucleus. Its subcellular location is the nucleoplasm. In terms of biological role, required for association of the cohesin complex with chromatin during interphase. Plays a role in sister chromatid cohesion and normal progression through prometaphase. The protein is MAU2 chromatid cohesion factor homolog of Drosophila simulans (Fruit fly).